The primary structure comprises 2123 residues: Bromodomain adjacent to zinc finger domain protein 2B (2123 aa).

Disordered stretches follow at residues 1 to 129, 144 to 306, 357 to 402, 473 to 534, 546 to 691, 756 to 793, and 937 to 960; these read MESG…VNGT, TPAS…LSQQ, PSPD…EMGK, NENV…HPHP, RGTD…RRVA, RAMD…GSAE, and ARKK…LNKE. The segment covering 7 to 46 has biased composition (low complexity); that stretch reads LPSSPASSTTPTSSSAPSVASAVSKSSLSTGAASLSSTAS. Residues 83 to 95 show a composition bias toward pro residues; that stretch reads FFPPLLGIPPLFA. Residues 100 to 116 are compositionally biased toward polar residues; it reads NHDSSFHSRTSGKSSRN. Low complexity-rich tracts occupy residues 147 to 157 and 193 to 216; these read SSSMGQNQSTS and ESSS…ISSS. Residues 217 to 243 show a composition bias toward acidic residues; it reads DSDDLEEEEEEDQSVEESEDDDSDSET. A compositionally biased stretch (basic and acidic residues) spans 259 to 277; it reads SDPKTDGQKATEKAQERRT. Low complexity-rich tracts occupy residues 291 to 306 and 366 to 379; these read PPFQ…LSQQ and NKNT…LTSE. The span at 473–502 shows a compositional bias: polar residues; it reads NENVSSSTPFSSPVNLSTSGRRAPGSQTPA. Positions 546–559 are enriched in basic and acidic residues; it reads RGTDSDVPSSKDSE. Residues 560-587 show a composition bias toward acidic residues; it reads DSNEDEEEDDEEEDEEDDEDDESDDSQS. The segment covering 588 to 597 has biased composition (low complexity); that stretch reads ESDSNSQSDS. Residues 598–615 show a composition bias toward acidic residues; the sequence is EGSEDDEEKDQEESDSDT. Composition is skewed to low complexity over residues 628–637 and 671–683; these read SSSAKSPPSS and TSSS…PHSG. Residues 690–765 enclose the MBD domain; that stretch reads VADDQELRIP…RAMDGRRGRP (76 aa). Positions 756 to 778 are enriched in basic and acidic residues; that stretch reads RAMDGRRGRPPNPDRPRAREESR. Residues 1004–1069 form the DDT domain; sequence GTTFSDCLMV…LSAAVCDPGL (66 aa). Disordered regions lie at residues 1183 to 1260, 1396 to 1444, 1499 to 1526, and 1588 to 1614; these read RDAS…QTAS, PPES…KTDA, TLVT…SSVQ, and FLTS…AQPV. The span at 1214–1238 shows a compositional bias: acidic residues; that stretch reads SDYDDDDDDDSDDQADEDEEDEEDK. The span at 1239–1248 shows a compositional bias: basic and acidic residues; sequence DDKKGKKTDI. Residues 1254 to 1281 are a coiled coil; sequence EGDQTASVEELEKQIEKLSKQQSQYRRK. 2 stretches are compositionally biased toward polar residues: residues 1408-1422 and 1430-1444; these read NVST…QNSG and PSAT…KTDA. Over residues 1505–1515 the composition is skewed to pro residues; it reads SQPPSKSPSPA. Residues 1588-1600 show a composition bias toward low complexity; that stretch reads FLTSSVASSKSDS. The PHD-type zinc-finger motif lies at 1886-1936; it reads KVYCQICRKGDNEELLLLCDGCDKGCHTYCHRPKITTIPDGDWFCPACISK. Residues 1949–2013 form a disordered region; it reads VKGKKTNDSK…AESTTSIKKP (65 aa). Residues 1984–1995 show a composition bias toward basic and acidic residues; that stretch reads GSKELKKRKMEE. Polar residues predominate over residues 1996-2010; the sequence is TTSLNLSKAESTTSI. The 105-residue stretch at 2015–2119 folds into the Bromo domain; sequence KDESRDLALC…KYFEKKWTDT (105 aa).

The protein belongs to the WAL family. As to quaternary structure, component of the BRF-1 ISWI chromatin remodeling complex, at least composed of SMARCA1 and BAZ2B, which regulates the spacing of histone octamers on the DNA template to facilitate access to DNA. Within the BRF-1 ISWI chromatin remodeling complex interacts with SMARCA1; the interaction is direct. Component of the BRF-5 ISWI chromatin remodeling complex, at least composed of SMARCA5/SNF2H and BAZ2B, which regulates the spacing of histone octamers on the DNA template to facilitate access to DNA. Within the BRF-5 ISWI chromatin remodeling complex interacts with SMARCA5/SNF2H; the interaction is direct. Interacts with acetylated lysine residues on histone H1.4, H2A, H2B, H3 and H4 (in vitro). Interacts with EHMT1.

It localises to the nucleus. In terms of biological role, regulatory subunit of the ATP-dependent BRF-1 and BRF-5 ISWI chromatin remodeling complexes, which form ordered nucleosome arrays on chromatin and facilitate access to DNA during DNA-templated processes such as DNA replication, transcription, and repair. Both complexes regulate the spacing of nucleosomes along the chromatin and have the ability to slide mononucleosomes to the center of a DNA template. The BRF-1 ISWI chromatin remodeling complex has a lower ATP hydrolysis rate than the BRF-5 ISWI chromatin remodeling complex. Chromatin reader protein, involved in positively modulating the rate of age-related behavioral deterioration. Represses the expression of mitochondrial function-related genes, perhaps by occupying their promoter regions, working in concert with histone methyltransferase EHMT1. This chain is Bromodomain adjacent to zinc finger domain protein 2B, found in Mus musculus (Mouse).